A 471-amino-acid chain; its full sequence is 5-hydroxytryptamine receptor 2A (471 aa).

The Extracellular portion of the chain corresponds to 1–80; sequence MEILCEDNTS…LQEKNWSALL (80 aa). N-linked (GlcNAc...) asparagine glycosylation is found at asparagine 8, asparagine 38, asparagine 44, asparagine 51, and asparagine 54. A helical membrane pass occupies residues 81–97; sequence TAVVIILTIAGNILVIM. The Cytoplasmic segment spans residues 98–111; that stretch reads AVSLEKKLQNATNY. A helical membrane pass occupies residues 112 to 137; the sequence is FLMSLAIADMLLGFLVMPVSMLTILY. At 138 to 146 the chain is on the extracellular side; sequence GYRWPLPSK. Residues 147 to 171 traverse the membrane as a helical segment; that stretch reads LCAVWIYLDVLFSTASIMHLCAISL. Cysteine 148 and cysteine 227 are disulfide-bonded. Residue aspartate 155 participates in serotonin binding. The short motif at 172-174 is the DRY motif; important for ligand-induced conformation changes element; it reads DRY. Residues 172–191 are Cytoplasmic-facing; sequence DRYVAIQNPIHHSRFNSRTK. A helical membrane pass occupies residues 192 to 215; sequence AFLKIIAVWTISVGVSMPIPVFGL. The Extracellular portion of the chain corresponds to 216-232; the sequence is QDDSKVFKQGSCLLADD. The helical transmembrane segment at 233 to 258 threads the bilayer; that stretch reads NFVLIGSFVAFFIPLTIMVITYFLTI. Residues 259–322 are Cytoplasmic-facing; that stretch reads KSLQKEATLC…QSISNEQKAC (64 aa). At serine 280 the chain carries Phosphoserine. Residues 323 to 348 form a helical membrane-spanning segment; sequence KVLGIVFFLFVVMWCPFFITNIMAVI. Residue asparagine 343 coordinates serotonin. A disulfide bridge links cysteine 349 with cysteine 353. Residues 349–356 are Extracellular-facing; sequence CKESCNEH. A helical transmembrane segment spans residues 357–382; the sequence is VIGALLNVFVWIGYLSSAVNPLVYTL. The NPxxY motif; important for ligand-induced conformation changes and signaling motif lies at 376–380; that stretch reads NPLVY. Residues 383–471 are Cytoplasmic-facing; it reads FNKTYRSAFS…NTVNEKVSCV (89 aa). The PDZ-binding signature appears at 469–471; that stretch reads SCV.

Belongs to the G-protein coupled receptor 1 family. As to quaternary structure, interacts (via C-terminus) with MPDZ and PATJ. May interact (via C-terminus) with MPP3, PRDX6, DLG4, DLG1, CASK, APBA1 and MAGI2. Interacts with GRM2 and DRD2; this may affect signaling.

The protein localises to the cell membrane. It localises to the cell projection. Its subcellular location is the dendrite. The protein resides in the axon. It is found in the cytoplasmic vesicle. The protein localises to the membrane. It localises to the caveola. Its subcellular location is the presynapse. Its activity is regulated as follows. G-protein coupled receptor activity is regulated by lipids: oleamide increases HTR2A-mediated activity. G-protein coupled receptor for 5-hydroxytryptamine (serotonin). Also functions as a receptor for various drugs and psychoactive substances, including mescaline, psilocybin, 1-(2,5-dimethoxy-4-iodophenyl)-2-aminopropane (DOI) and lysergic acid diethylamide (LSD). Ligand binding causes a conformation change that triggers signaling via guanine nucleotide-binding proteins (G proteins) and modulates the activity of downstream effectors. HTR2A is coupled to G(q)/G(11) G alpha proteins and activates phospholipase C-beta, releasing diacylglycerol (DAG) and inositol 1,4,5-trisphosphate (IP3) second messengers that modulate the activity of phosphatidylinositol 3-kinase and promote the release of Ca(2+) ions from intracellular stores, respectively. Beta-arrestin family members inhibit signaling via G proteins and mediate activation of alternative signaling pathways. Affects neural activity, perception, cognition and mood. Plays a role in the regulation of behavior, including responses to anxiogenic situations and psychoactive substances. Plays a role in intestinal smooth muscle contraction, and may play a role in arterial vasoconstriction. This Cricetulus griseus (Chinese hamster) protein is 5-hydroxytryptamine receptor 2A (HTR2A).